We begin with the raw amino-acid sequence, 597 residues long: Adenine deaminase (597 aa).

Belongs to the metallo-dependent hydrolases superfamily. Adenine deaminase family. Mn(2+) serves as cofactor.

It catalyses the reaction adenine + H2O + H(+) = hypoxanthine + NH4(+). The protein is Adenine deaminase of Paracoccus denitrificans (strain Pd 1222).